An 88-amino-acid chain; its full sequence is Small ribosomal subunit protein bS20 (88 aa).

The protein belongs to the bacterial ribosomal protein bS20 family.

Its function is as follows. Binds directly to 16S ribosomal RNA. This is Small ribosomal subunit protein bS20 from Aromatoleum aromaticum (strain DSM 19018 / LMG 30748 / EbN1) (Azoarcus sp. (strain EbN1)).